A 583-amino-acid polypeptide reads, in one-letter code: Aspartate--tRNA(Asp/Asn) ligase (583 aa).

Residue glutamate 173 participates in L-aspartate binding. Positions 197 to 200 (QMFK) are aspartate. Residue arginine 219 participates in L-aspartate binding. ATP contacts are provided by residues 219–221 (RDE) and glutamine 228. Histidine 447 lines the L-aspartate pocket. Glutamate 481 contacts ATP. Arginine 488 serves as a coordination point for L-aspartate. 533–536 (GLDR) lines the ATP pocket.

Belongs to the class-II aminoacyl-tRNA synthetase family. Type 1 subfamily. In terms of assembly, homodimer.

The protein localises to the cytoplasm. It carries out the reaction tRNA(Asx) + L-aspartate + ATP = L-aspartyl-tRNA(Asx) + AMP + diphosphate. Functionally, aspartyl-tRNA synthetase with relaxed tRNA specificity since it is able to aspartylate not only its cognate tRNA(Asp) but also tRNA(Asn). Reaction proceeds in two steps: L-aspartate is first activated by ATP to form Asp-AMP and then transferred to the acceptor end of tRNA(Asp/Asn). This is Aspartate--tRNA(Asp/Asn) ligase from Elusimicrobium minutum (strain Pei191).